Consider the following 312-residue polypeptide: Very-long-chain 3-oxoacyl-CoA reductase (312 aa).

The chain crosses the membrane as a helical span at residues 4–24; the sequence is APPAAGFLYWVGASTIAYLAL. 50 to 79 contacts NADP(+); that stretch reads GEWAVVTGGTDGIGKAYAEELAKRGMKIVL. Transmembrane regions (helical) follow at residues 182 to 202 and 269 to 285; these read GVIL…LTIY and TTGY…NSIM. S189 contacts substrate. The active-site Proton acceptor is the Y202. The Di-lysine motif motif lies at 308–312; that stretch reads KRKKN.

The protein belongs to the short-chain dehydrogenases/reductases (SDR) family. 17-beta-HSD 3 subfamily. Expressed in most tissues tested.

The protein resides in the endoplasmic reticulum membrane. The catalysed reaction is a very-long-chain (3R)-3-hydroxyacyl-CoA + NADP(+) = a very-long-chain 3-oxoacyl-CoA + NADPH + H(+). The enzyme catalyses 17beta-estradiol + NAD(+) = estrone + NADH + H(+). It carries out the reaction 17beta-estradiol + NADP(+) = estrone + NADPH + H(+). It catalyses the reaction 3-oxooctadecanoyl-CoA + NADPH + H(+) = (3R)-hydroxyoctadecanoyl-CoA + NADP(+). The catalysed reaction is (7Z,10Z,13Z,16Z)-3-oxodocosatetraenoyl-CoA + NADPH + H(+) = (3R)-hydroxy-(7Z,10Z,13Z,16Z)-docosatetraenoyl-CoA + NADP(+). The enzyme catalyses 3-oxo-(7Z,10Z,13Z,16Z,19Z)-docosapentaenoyl-CoA + NADPH + H(+) = (3R)-hydroxy-(7Z,10Z,13Z,16Z,19Z)-docosapentaenoyl-CoA + NADP(+). It carries out the reaction (8Z,11Z,14Z)-3-oxoeicosatrienoyl-CoA + NADPH + H(+) = (3R)-hydroxy-(8Z,11Z,14Z)-eicosatrienoyl-CoA + NADP(+). The protein operates within lipid metabolism; fatty acid biosynthesis. It participates in steroid biosynthesis; estrogen biosynthesis. Functionally, catalyzes the second of the four reactions of the long-chain fatty acids elongation cycle. This endoplasmic reticulum-bound enzymatic process, allows the addition of two carbons to the chain of long- and very long-chain fatty acids/VLCFAs per cycle. This enzyme has a 3-ketoacyl-CoA reductase activity, reducing 3-ketoacyl-CoA to 3-hydroxyacyl-CoA, within each cycle of fatty acid elongation. Thereby, it may participate in the production of VLCFAs of different chain lengths that are involved in multiple biological processes as precursors of membrane lipids and lipid mediators. May also catalyze the transformation of estrone (E1) into estradiol (E2) and play a role in estrogen formation. In Mus musculus (Mouse), this protein is Very-long-chain 3-oxoacyl-CoA reductase.